Here is a 275-residue protein sequence, read N- to C-terminus: 3-methyl-2-oxobutanoate hydroxymethyltransferase (275 aa).

Mg(2+) contacts are provided by D55 and D94. 3-methyl-2-oxobutanoate-binding positions include 55–56 (DS), D94, and K123. E125 lines the Mg(2+) pocket. E192 functions as the Proton acceptor in the catalytic mechanism.

This sequence belongs to the PanB family. Homodecamer; pentamer of dimers. Mg(2+) is required as a cofactor.

It localises to the cytoplasm. It carries out the reaction 3-methyl-2-oxobutanoate + (6R)-5,10-methylene-5,6,7,8-tetrahydrofolate + H2O = 2-dehydropantoate + (6S)-5,6,7,8-tetrahydrofolate. It functions in the pathway cofactor biosynthesis; (R)-pantothenate biosynthesis; (R)-pantoate from 3-methyl-2-oxobutanoate: step 1/2. Functionally, catalyzes the reversible reaction in which hydroxymethyl group from 5,10-methylenetetrahydrofolate is transferred onto alpha-ketoisovalerate to form ketopantoate. This is 3-methyl-2-oxobutanoate hydroxymethyltransferase from Halorhodospira halophila (strain DSM 244 / SL1) (Ectothiorhodospira halophila (strain DSM 244 / SL1)).